We begin with the raw amino-acid sequence, 338 residues long: NAD kinase (338 aa).

The active-site Proton acceptor is aspartate 66. Residues 66-67, arginine 71, 141-142, lysine 152, aspartate 171, 182-187, and alanine 206 each bind NAD(+); these read DG, ND, and TAYAFS. The segment at 317–338 is disordered; the sequence is GDAGVAGTEPDKPGERDGKAGA. A compositionally biased stretch (basic and acidic residues) spans 325-338; it reads EPDKPGERDGKAGA.

This sequence belongs to the NAD kinase family. It depends on a divalent metal cation as a cofactor.

The protein localises to the cytoplasm. It catalyses the reaction NAD(+) + ATP = ADP + NADP(+) + H(+). In terms of biological role, involved in the regulation of the intracellular balance of NAD and NADP, and is a key enzyme in the biosynthesis of NADP. Catalyzes specifically the phosphorylation on 2'-hydroxyl of the adenosine moiety of NAD to yield NADP. The protein is NAD kinase of Bifidobacterium longum subsp. infantis (strain ATCC 15697 / DSM 20088 / JCM 1222 / NCTC 11817 / S12).